A 300-amino-acid chain; its full sequence is Ribosomal RNA small subunit methyltransferase H (300 aa).

S-adenosyl-L-methionine contacts are provided by residues 46–48 (GGH), aspartate 65, phenylalanine 92, aspartate 107, and glutamine 114.

Belongs to the methyltransferase superfamily. RsmH family.

It is found in the cytoplasm. It carries out the reaction cytidine(1402) in 16S rRNA + S-adenosyl-L-methionine = N(4)-methylcytidine(1402) in 16S rRNA + S-adenosyl-L-homocysteine + H(+). Specifically methylates the N4 position of cytidine in position 1402 (C1402) of 16S rRNA. The chain is Ribosomal RNA small subunit methyltransferase H from Prochlorococcus marinus (strain MIT 9301).